We begin with the raw amino-acid sequence, 517 residues long: ATP synthase subunit alpha (517 aa).

175–182 (GDRQTGKT) contributes to the ATP binding site.

Belongs to the ATPase alpha/beta chains family. As to quaternary structure, F-type ATPases have 2 components, CF(1) - the catalytic core - and CF(0) - the membrane proton channel. CF(1) has five subunits: alpha(3), beta(3), gamma(1), delta(1), epsilon(1). CF(0) has three main subunits: a(1), b(2) and c(9-12). The alpha and beta chains form an alternating ring which encloses part of the gamma chain. CF(1) is attached to CF(0) by a central stalk formed by the gamma and epsilon chains, while a peripheral stalk is formed by the delta and b chains.

It localises to the cell membrane. It carries out the reaction ATP + H2O + 4 H(+)(in) = ADP + phosphate + 5 H(+)(out). Functionally, produces ATP from ADP in the presence of a proton gradient across the membrane. The alpha chain is a regulatory subunit. This is ATP synthase subunit alpha from Herpetosiphon aurantiacus (strain ATCC 23779 / DSM 785 / 114-95).